We begin with the raw amino-acid sequence, 349 residues long: MAGSLTASNRRRNAEDSSEIYRWTIGFARFVHYPSSPSPHPVLKPLGKREQYHSPHGTWLSASSSTVSLHIVDELNRSDVILSVKLGQKVLEEHYISKLNFTWPQMSCVSGFPSRGSRAIFVTYMDSANQIQKFALRFSTCDAALEFVEALKEKIKGLKEASTQNQKNKTRCDVSFQSDYNPSDAIIPRATQKEPNMVRPLNSYVPEMLPRIVYEAQYQKSETRSEVSFQSDYNPSIEIFPRATEEEPNMVRFFDSSVPEVLPRPEYEAGQALYPSQSTLNQIPSLPPSFTTLLSGCFPDSTLDAGQTTVKQNPDLKSQILKYMEDSSFQDMLQKVERIIDEIGGNWIT.

It localises to the cytoplasm. Its function is as follows. Required for accurate chromosome segregation in meiosis. Required for pairing to occur between homologous chromosomes. Acts in early recombination steps and ensures pairing fidelity and proper repair of meiotic DNA double-strand-breaks. Regulates recombination and pairing of homologous chromosomes during meiotic prophase by controlling transport of RAD50 from cytoplasm to the nucleus. May affect pairing of the gene-rich fraction of the genome rather than preventing pairing between repetitive DNA elements. The sequence is that of Protein POOR HOMOLOGOUS SYNAPSIS 1 from Arabidopsis thaliana (Mouse-ear cress).